The chain runs to 158 residues: NAD(P)H-quinone oxidoreductase subunit N (158 aa).

The protein belongs to the complex I NdhN subunit family. NDH-1 can be composed of about 15 different subunits; different subcomplexes with different compositions have been identified which probably have different functions.

It is found in the cellular thylakoid membrane. It carries out the reaction a plastoquinone + NADH + (n+1) H(+)(in) = a plastoquinol + NAD(+) + n H(+)(out). The catalysed reaction is a plastoquinone + NADPH + (n+1) H(+)(in) = a plastoquinol + NADP(+) + n H(+)(out). Functionally, NDH-1 shuttles electrons from an unknown electron donor, via FMN and iron-sulfur (Fe-S) centers, to quinones in the respiratory and/or the photosynthetic chain. The immediate electron acceptor for the enzyme in this species is believed to be plastoquinone. Couples the redox reaction to proton translocation, and thus conserves the redox energy in a proton gradient. Cyanobacterial NDH-1 also plays a role in inorganic carbon-concentration. In Synechococcus elongatus (strain ATCC 33912 / PCC 7942 / FACHB-805) (Anacystis nidulans R2), this protein is NAD(P)H-quinone oxidoreductase subunit N.